A 372-amino-acid chain; its full sequence is Glutamate 5-kinase (372 aa).

K6 is a binding site for ATP. Substrate is bound by residues S46, D133, and N145. Residues 165-166 and 207-213 contribute to the ATP site; these read TD and TGGMYTK. Residues 272-350 form the PUA domain; the sequence is SGRLFIDEGA…HEIEKILGYK (79 aa).

It belongs to the glutamate 5-kinase family.

Its subcellular location is the cytoplasm. The catalysed reaction is L-glutamate + ATP = L-glutamyl 5-phosphate + ADP. The protein operates within amino-acid biosynthesis; L-proline biosynthesis; L-glutamate 5-semialdehyde from L-glutamate: step 1/2. Its function is as follows. Catalyzes the transfer of a phosphate group to glutamate to form L-glutamate 5-phosphate. The sequence is that of Glutamate 5-kinase from Thermoanaerobacter pseudethanolicus (strain ATCC 33223 / 39E) (Clostridium thermohydrosulfuricum).